The primary structure comprises 92 residues: Cell division protein FtsB (92 aa).

Topologically, residues 1-3 (MKV) are cytoplasmic. A helical membrane pass occupies residues 4–21 (VPILLFVLLAALQYRLWF). Residues 22-92 (GKNSIPEYVA…TFYRILPSEE (71 aa)) lie on the Periplasmic side of the membrane. A coiled-coil region spans residues 31–74 (AMEKSVAEQAEQNTELLQRNNLLKADIQDLKVGLEAVEERARNE).

This sequence belongs to the FtsB family. As to quaternary structure, part of a complex composed of FtsB, FtsL and FtsQ.

Its subcellular location is the cell inner membrane. Functionally, essential cell division protein. May link together the upstream cell division proteins, which are predominantly cytoplasmic, with the downstream cell division proteins, which are predominantly periplasmic. The protein is Cell division protein FtsB of Pseudoalteromonas atlantica (strain T6c / ATCC BAA-1087).